We begin with the raw amino-acid sequence, 237 residues long: Concanavalin-A (237 aa).

Positions 8 and 10 each coordinate Mn(2+). 4 residues coordinate Ca(2+): Asp-10, Tyr-12, Asn-14, and Asp-19. A carbohydrate is bound at residue Asn-14. 2 residues coordinate Mn(2+): Asp-19 and His-24. Residues Gly-98–Tyr-100, Asp-208, and Arg-228 each bind a carbohydrate.

This sequence belongs to the leguminous lectin family. Homotetramer. Concanavalin A-like lectins of the Diocleinae subtribe undergo proteolytic processing referred to as circular permutation. The propeptide is split into an N-terminal and a C-terminal part, the gamma and beta chain, respectively. These are then religated in beta-gamma order to form the mature alpha chain. The beta and gamma chains can often be detected in cell extracts. Residues 1-118 of the mature chain, as displayed here, probably constitute the beta chain in the propeptide, residues 119-237 the gamma chain.

In terms of biological role, glucose/D-mannose specific lectin. The chain is Concanavalin-A from Canavalia cathartica (Jackbean).